A 278-amino-acid chain; its full sequence is Probable cytochrome c oxidase subunit 3 (278 aa).

6 helical membrane-spanning segments follow: residues 21–41, 46–66, 89–109, 174–194, 212–232, and 256–276; these read PWPV…VSFM, FNIY…YSWW, IGMA…FASF, CVTA…MQAY, FYLA…FLIV, and AWYW…VYIF.

The protein belongs to the cytochrome c oxidase subunit 3 family.

Its subcellular location is the cell membrane. It catalyses the reaction 4 Fe(II)-[cytochrome c] + O2 + 8 H(+)(in) = 4 Fe(III)-[cytochrome c] + 2 H2O + 4 H(+)(out). The chain is Probable cytochrome c oxidase subunit 3 (ctaE) from Rickettsia felis (strain ATCC VR-1525 / URRWXCal2) (Rickettsia azadi).